The sequence spans 571 residues: Folylpolyglutamate synthase (571 aa).

Position 122–125 (122–125 (GKGS)) interacts with ATP. Residues serine 146, glutamate 215, and histidine 243 each contribute to the Mg(2+) site. Positions 363 and 385 each coordinate ATP.

The protein belongs to the folylpolyglutamate synthase family. The cofactor is a monovalent cation. As to expression, expressed in both shoots and roots, but expression in roots is higher compared with shoots. Distinct expression in the quiescent center (QC) region of the root tip. Also expressed in vascular tissues of the cotyledons and hypocotyls, and the first true leaves of 7 days old seedlings.

It is found in the plastid. The protein localises to the chloroplast. The enzyme catalyses (6S)-5,6,7,8-tetrahydrofolyl-(gamma-L-Glu)(n) + L-glutamate + ATP = (6S)-5,6,7,8-tetrahydrofolyl-(gamma-L-Glu)(n+1) + ADP + phosphate + H(+). Its pathway is cofactor biosynthesis; tetrahydrofolylpolyglutamate biosynthesis. Catalyzes conversion of folates to polyglutamate derivatives allowing concentration of folate compounds in the cell and the intracellular retention of these cofactors, which are important substrates for most of the folate-dependent enzymes that are involved in one-carbon transfer reactions involved in purine, pyrimidine and amino acid synthesis. Essential for organellar and whole-plant folate homeostasis. Required for postembryonic root development. Generates polyglutamylated folate cofactors to support C1 metabolism required for meristem maintenance and cell expansion during postembryonic root development. The protein is Folylpolyglutamate synthase of Arabidopsis thaliana (Mouse-ear cress).